Reading from the N-terminus, the 242-residue chain is Ubiquinone biosynthesis O-methyltransferase (242 aa).

S-adenosyl-L-methionine contacts are provided by arginine 44, glycine 64, aspartate 85, and methionine 129.

This sequence belongs to the methyltransferase superfamily. UbiG/COQ3 family.

It catalyses the reaction a 3-demethylubiquinol + S-adenosyl-L-methionine = a ubiquinol + S-adenosyl-L-homocysteine + H(+). The catalysed reaction is a 3-(all-trans-polyprenyl)benzene-1,2-diol + S-adenosyl-L-methionine = a 2-methoxy-6-(all-trans-polyprenyl)phenol + S-adenosyl-L-homocysteine + H(+). The protein operates within cofactor biosynthesis; ubiquinone biosynthesis. Its function is as follows. O-methyltransferase that catalyzes the 2 O-methylation steps in the ubiquinone biosynthetic pathway. In Salmonella typhi, this protein is Ubiquinone biosynthesis O-methyltransferase.